Here is a 769-residue protein sequence, read N- to C-terminus: Cullin-3 (769 aa).

Positions 614-655 are disordered; it reads DRELPSTTSSTTTTTTTATSSSTSTSPSSSSSSISTPTPSKS. Residues 618–653 show a composition bias toward low complexity; that stretch reads PSTTSSTTTTTTTATSSSTSTSPSSSSSSISTPTPS. The 63-residue stretch at 699-761 folds into the Cullin neddylation domain; the sequence is DRKHQIEASI…REYLERSKQD (63 aa). Lys713 is covalently cross-linked (Glycyl lysine isopeptide (Lys-Gly) (interchain with G-Cter in NEDD8)).

Belongs to the cullin family. Post-translationally, neddylated. Deneddylated via its interaction with the COP9 signalosome (CSN) complex.

It localises to the nucleus. It participates in protein modification; protein ubiquitination. Functionally, probable core component of cullin-based SCF-like E3 ubiquitin-protein ligase complexes which mediate the ubiquitination and subsequent proteasomal degradation of target proteins. The E3 ubiquitin-protein ligase activity of the complex is dependent on the neddylation of the cullin subunit. In Dictyostelium discoideum (Social amoeba), this protein is Cullin-3 (culC).